Here is a 238-residue protein sequence, read N- to C-terminus: Neuromodulin (238 aa).

Residues methionine 1–alanine 238 form a disordered region. S-palmitoyl cysteine attachment occurs at residues cysteine 3 and cysteine 4. Basic and acidic residues predominate over residues lysine 9–histidine 32. Positions alanine 31–glutamine 60 constitute an IQ domain. The residue at position 41 (serine 41) is a Phosphoserine; by PHK and PKC. Residues glutamate 54–glutamate 83 show a composition bias toward basic and acidic residues. A compositionally biased stretch (low complexity) spans glycine 84–glycine 95. Residues lysine 97–glycine 116 show a composition bias toward basic and acidic residues. The segment covering alanine 119–serine 130 has biased composition (low complexity). Over residues glutamate 139 to serine 154 the composition is skewed to polar residues. Phosphoserine occurs at positions 151, 153, and 154. Residues lysine 155–glutamine 167 are compositionally biased toward basic and acidic residues. A compositionally biased stretch (low complexity) spans alanine 168–threonine 199. Threonine 181 carries the phosphothreonine modification. Phosphoserine; by CK2 is present on residues serine 202 and serine 203. Over residues aspartate 213–glutamate 225 the composition is skewed to basic and acidic residues. Residues glycine 226–alanine 238 are compositionally biased toward acidic residues.

It belongs to the neuromodulin family. Identified in a complex containing FGFR4, NCAM1, CDH2, PLCG1, FRS2, SRC, SHC1, GAP43 and CTTN. Interacts (via IQ domain) with calmodulin. Binds calmodulin with a greater affinity in the absence of Ca(2+) than in its presence. In terms of processing, phosphorylated. Phosphorylation of this protein by a protein kinase C is specifically correlated with certain forms of synaptic plasticity. Post-translationally, palmitoylated by ZDHHC3. Palmitoylation is regulated by ARF6 and is essential for plasma membrane association and axonal and dendritic filopodia induction. Deacylated by LYPLA2.

The protein resides in the cell membrane. The protein localises to the cell projection. Its subcellular location is the growth cone membrane. It localises to the synapse. It is found in the filopodium membrane. The protein resides in the perikaryon. The protein localises to the dendrite. Its subcellular location is the axon. It localises to the cytoplasm. In terms of biological role, this protein is associated with nerve growth. It is a major component of the motile 'growth cones' that form the tips of elongating axons. Plays a role in axonal and dendritic filopodia induction. The protein is Neuromodulin (GAP43) of Macaca fascicularis (Crab-eating macaque).